A 345-amino-acid polypeptide reads, in one-letter code: Protoheme IX farnesyltransferase (345 aa).

Transmembrane regions (helical) follow at residues 33–53, 54–74, 105–125, 126–146, 154–174, 182–202, 226–246, 247–267, and 315–335; these read VMSL…TPIH, PLLG…SGAL, ATLG…AINW, LAAG…TMWL, IVIG…AATG, LMVL…SLYI, QILL…FTGL, GGWL…TLAV, and ILYL…GLPI.

The protein belongs to the UbiA prenyltransferase family. Protoheme IX farnesyltransferase subfamily.

Its subcellular location is the cell inner membrane. The catalysed reaction is heme b + (2E,6E)-farnesyl diphosphate + H2O = Fe(II)-heme o + diphosphate. It functions in the pathway porphyrin-containing compound metabolism; heme O biosynthesis; heme O from protoheme: step 1/1. Its function is as follows. Converts heme B (protoheme IX) to heme O by substitution of the vinyl group on carbon 2 of heme B porphyrin ring with a hydroxyethyl farnesyl side group. This Caulobacter sp. (strain K31) protein is Protoheme IX farnesyltransferase.